A 1382-amino-acid chain; its full sequence is DNA-directed RNA polymerase subunit beta (1382 aa).

Belongs to the RNA polymerase beta chain family. The RNAP catalytic core consists of 2 alpha, 1 beta, 1 beta' and 1 omega subunit. When a sigma factor is associated with the core the holoenzyme is formed, which can initiate transcription.

It carries out the reaction RNA(n) + a ribonucleoside 5'-triphosphate = RNA(n+1) + diphosphate. DNA-dependent RNA polymerase catalyzes the transcription of DNA into RNA using the four ribonucleoside triphosphates as substrates. The sequence is that of DNA-directed RNA polymerase subunit beta from Anaplasma marginale (strain Florida).